Reading from the N-terminus, the 89-residue chain is Acylphosphatase (89 aa).

An Acylphosphatase-like domain is found at 3–89; the sequence is HIHLQVFGRV…NQKLSDFRSI (87 aa). Active-site residues include Arg18 and Asn36.

The protein belongs to the acylphosphatase family.

The enzyme catalyses an acyl phosphate + H2O = a carboxylate + phosphate + H(+). This is Acylphosphatase (acyP) from Staphylococcus aureus (strain Mu3 / ATCC 700698).